The following is a 199-amino-acid chain: Phosphoheptose isomerase (199 aa).

The 163-residue stretch at 36-198 (MAQCLLNEHK…DRKLIPSSED (163 aa)) folds into the SIS domain. Substrate is bound at residue 51-53 (NGG). The Zn(2+) site is built by His-60 and Glu-64. Substrate-binding positions include Glu-64, 93–94 (ND), 119–121 (STS), Ser-124, and Gln-174. The Zn(2+) site is built by Gln-174 and His-182.

The protein belongs to the SIS family. GmhA subfamily. As to quaternary structure, homotetramer. It depends on Zn(2+) as a cofactor.

It localises to the cytoplasm. It carries out the reaction 2 D-sedoheptulose 7-phosphate = D-glycero-alpha-D-manno-heptose 7-phosphate + D-glycero-beta-D-manno-heptose 7-phosphate. It participates in carbohydrate biosynthesis; D-glycero-D-manno-heptose 7-phosphate biosynthesis; D-glycero-alpha-D-manno-heptose 7-phosphate and D-glycero-beta-D-manno-heptose 7-phosphate from sedoheptulose 7-phosphate: step 1/1. Catalyzes the isomerization of sedoheptulose 7-phosphate in D-glycero-D-manno-heptose 7-phosphate. This is Phosphoheptose isomerase from Coxiella burnetii (strain CbuK_Q154) (Coxiella burnetii (strain Q154)).